A 445-amino-acid chain; its full sequence is Succinate--CoA ligase [ADP-forming] subunit beta, mitochondrial (445 aa).

A mitochondrion-targeting transit peptide spans 1-17 (MLSNIVKKTIQSSKNLK). The 228-residue stretch at 43-270 (QKMMKSYGIN…DNAAFRHPDI (228 aa)) folds into the ATP-grasp domain. Residues Lys-80 and 87 to 89 (GRG) contribute to the ATP site. Asn-240 and Asp-254 together coordinate Mg(2+). Substrate is bound by residues Asn-305 and 362–364 (GIM).

It belongs to the succinate/malate CoA ligase beta subunit family. ATP-specific subunit beta subfamily. Heterodimer of an alpha and a beta subunit. The beta subunit determines specificity for ATP. Mg(2+) serves as cofactor.

The protein resides in the mitochondrion. The catalysed reaction is succinate + ATP + CoA = succinyl-CoA + ADP + phosphate. Its pathway is carbohydrate metabolism; tricarboxylic acid cycle; succinate from succinyl-CoA (ligase route): step 1/1. ATP-specific succinyl-CoA synthetase functions in the citric acid cycle (TCA), coupling the hydrolysis of succinyl-CoA to the synthesis of ATP and thus represents the only step of substrate-level phosphorylation in the TCA. The beta subunit provides nucleotide specificity of the enzyme and binds the substrate succinate, while the binding sites for coenzyme A and phosphate are found in the alpha subunit. This chain is Succinate--CoA ligase [ADP-forming] subunit beta, mitochondrial (scsC), found in Dictyostelium discoideum (Social amoeba).